The chain runs to 155 residues: Small ribosomal subunit protein uS7 (155 aa).

It belongs to the universal ribosomal protein uS7 family. In terms of assembly, part of the 30S ribosomal subunit. Contacts proteins S9 and S11.

One of the primary rRNA binding proteins, it binds directly to 16S rRNA where it nucleates assembly of the head domain of the 30S subunit. Is located at the subunit interface close to the decoding center, probably blocks exit of the E-site tRNA. This is Small ribosomal subunit protein uS7 from Corynebacterium efficiens (strain DSM 44549 / YS-314 / AJ 12310 / JCM 11189 / NBRC 100395).